The primary structure comprises 182 residues: Large ribosomal subunit protein bL25 (182 aa).

Belongs to the bacterial ribosomal protein bL25 family. CTC subfamily. As to quaternary structure, part of the 50S ribosomal subunit; part of the 5S rRNA/L5/L18/L25 subcomplex. Contacts the 5S rRNA. Binds to the 5S rRNA independently of L5 and L18.

This is one of the proteins that binds to the 5S RNA in the ribosome where it forms part of the central protuberance. This is Large ribosomal subunit protein bL25 from Borrelia duttonii (strain Ly).